Reading from the N-terminus, the 452-residue chain is Ribosome biogenesis protein YTM1 (452 aa).

The segment at isoleucine 17–glutamate 98 is ubiquitin-like (UBL) domain. 3 WD repeats span residues proline 110–isoleucine 148, alanine 150–alanine 195, and leucine 208–valine 247. Residues aspartate 245 to valine 269 form a disordered region. A compositionally biased stretch (basic and acidic residues) spans leucine 252–valine 269. WD repeat units follow at residues serine 282–threonine 322, alanine 325–threonine 364, methionine 371–alanine 411, and glycine 418–valine 452.

It belongs to the WD repeat WDR12/YTM1 family. In terms of assembly, component of the NOP7 complex, composed of ERB1, NOP7 and YTM1. The complex is held together by ERB1, which interacts with NOP7 via its N-terminal domain and with YTM1 via a high-affinity interaction between the seven-bladed beta-propeller domains of the 2 proteins. The NOP7 complex associates with the 66S pre-ribosome. Interacts (via UBL domain) with MDN1 (via VWFA/MIDAS domain).

The protein resides in the nucleus. It is found in the nucleolus. It localises to the nucleoplasm. Its function is as follows. Component of the NOP7 complex, which is required for maturation of the 25S and 5.8S ribosomal RNAs and formation of the 60S ribosome. This is Ribosome biogenesis protein YTM1 from Laccaria bicolor (strain S238N-H82 / ATCC MYA-4686) (Bicoloured deceiver).